Reading from the N-terminus, the 293-residue chain is Ribosomal protein L11 methyltransferase (293 aa).

Threonine 145, glycine 166, aspartate 188, and asparagine 230 together coordinate S-adenosyl-L-methionine.

The protein belongs to the methyltransferase superfamily. PrmA family.

The protein resides in the cytoplasm. The enzyme catalyses L-lysyl-[protein] + 3 S-adenosyl-L-methionine = N(6),N(6),N(6)-trimethyl-L-lysyl-[protein] + 3 S-adenosyl-L-homocysteine + 3 H(+). In terms of biological role, methylates ribosomal protein L11. This is Ribosomal protein L11 methyltransferase from Klebsiella pneumoniae subsp. pneumoniae (strain ATCC 700721 / MGH 78578).